A 539-amino-acid polypeptide reads, in one-letter code: Carboxypeptidase Y homolog A (539 aa).

Positions 1 to 17 (MKALTATLLVGTALAAV) are cleaved as a signal peptide. A propeptide spanning residues 18-122 (PPQQPIQVPT…KLEKYDLRVK (105 aa)) is cleaved from the precursor. 5 disulfide bridges follow: C176/C416, C310/C324, C334/C357, C341/C350, and C379/C386. N-linked (GlcNAc...) asparagine glycosylation occurs at N207. The active site involves S263. D455 is an active-site residue. N506 carries an N-linked (GlcNAc...) asparagine glycan. H517 is an active-site residue.

The protein belongs to the peptidase S10 family.

It localises to the vacuole. It carries out the reaction Release of a C-terminal amino acid with broad specificity.. Vacuolar carboxypeptidase involved in degradation of small peptides. Digests preferentially peptides containing an aliphatic or hydrophobic residue in P1' position, as well as methionine, leucine or phenylalanine in P1 position of ester substrate. This Coccidioides posadasii (strain C735) (Valley fever fungus) protein is Carboxypeptidase Y homolog A (cpyA).